Here is a 367-residue protein sequence, read N- to C-terminus: Protein-glutamate methylesterase/protein-glutamine glutaminase 1 (367 aa).

The Response regulatory domain maps to 9–126 (KVLCVDDSAL…RDGMLDYSEK (118 aa)). Asp60 carries the 4-aspartylphosphate modification. A CheB-type methylesterase domain is found at 168-360 (LVSTEKLIIV…RRIMARLASM (193 aa)). Residues Ser180, His206, and Asp302 contribute to the active site.

This sequence belongs to the CheB family. Phosphorylated by CheA. Phosphorylation of the N-terminal regulatory domain activates the methylesterase activity.

It localises to the cytoplasm. The catalysed reaction is [protein]-L-glutamate 5-O-methyl ester + H2O = L-glutamyl-[protein] + methanol + H(+). It catalyses the reaction L-glutaminyl-[protein] + H2O = L-glutamyl-[protein] + NH4(+). Functionally, involved in chemotaxis. Part of a chemotaxis signal transduction system that modulates chemotaxis in response to various stimuli. Catalyzes the demethylation of specific methylglutamate residues introduced into the chemoreceptors (methyl-accepting chemotaxis proteins or MCP) by CheR. Also mediates the irreversible deamidation of specific glutamine residues to glutamic acid. This is Protein-glutamate methylesterase/protein-glutamine glutaminase 1 from Burkholderia pseudomallei (strain K96243).